The sequence spans 227 residues: Izumo sperm-egg fusion protein 4 (227 aa).

Residues 1–24 (MFGQGRLGQAMALLLFLGMTAALA) form the signal peptide. N-linked (GlcNAc...) asparagine glycosylation is found at Asn153 and Asn214.

This sequence belongs to the Izumo family.

It localises to the secreted. This is Izumo sperm-egg fusion protein 4 (Izumo4) from Mus musculus (Mouse).